The sequence spans 135 residues: Large ribosomal subunit protein bL17 (135 aa).

Belongs to the bacterial ribosomal protein bL17 family. Part of the 50S ribosomal subunit. Contacts protein L32.

This Listeria monocytogenes serotype 4b (strain CLIP80459) protein is Large ribosomal subunit protein bL17.